The sequence spans 472 residues: Zinc finger CCCH domain-containing protein 59 (472 aa).

The tract at residues 87 to 139 (YKSPEGNRPRQNAANGSAKPQVIGTGHRVSNQPRKNAVYGPRSSSLSDTRGCG) is disordered. Residues 145 to 172 (SPKKSVCNFWKDGNCKKGEKCQFLHSWS) form a C3H1-type zinc finger. WD repeat units lie at residues 185-226 (GHKN…RSIN), 261-301 (HLEG…SDPF), 310-347 (HHSG…CRMT), 350-387 (QHIG…SLKV), and 436-472 (FSTQ…GTKV).

In Arabidopsis thaliana (Mouse-ear cress), this protein is Zinc finger CCCH domain-containing protein 59 (ZFWD3).